The primary structure comprises 88 residues: Small ribosomal subunit protein bS16 (88 aa).

It belongs to the bacterial ribosomal protein bS16 family.

This chain is Small ribosomal subunit protein bS16, found in Pelotomaculum thermopropionicum (strain DSM 13744 / JCM 10971 / SI).